Consider the following 487-residue polypeptide: 1,4-beta-D-glucan cellobiohydrolase CEL6A (487 aa).

Positions Met1–Ser17 are cleaved as a signal peptide. Residues Ala27–Leu63 form the CBM1 domain. Disulfide bonds link Cys35–Cys52 and Cys46–Cys62. The segment covering Pro64 to Thr117 has biased composition (low complexity). Residues Pro64 to Ser127 form a disordered region. Residues Trp175 and Asp177 each contribute to the substrate site. The active site involves Asp216. The Proton donor role is filled by Asp262. 6 residues coordinate substrate: His307, Trp310, Asn346, Trp407, Lys435, and Glu439. Asp441 (proton acceptor) is an active-site residue.

The protein belongs to the glycosyl hydrolase 6 (cellulase B) family.

The protein resides in the secreted. It catalyses the reaction Hydrolysis of (1-&gt;4)-beta-D-glucosidic linkages in cellulose and cellotetraose, releasing cellobiose from the non-reducing ends of the chains.. Exoglucanase that plays an important function in biomass degradation by catalyzing the hydrolysis of the non-reducing end beta-1,4-glucosidic linkages in cellulose and cellotetraose to release cellobiose. Shows higher hydrolytic activities on phosphoric acid-swollen cellulose (PSC), beta-glucan, and cellooligosaccharide derivatives than on cellulose, of which the best substrates were cellooligosaccharides. In Pyricularia oryzae (strain 70-15 / ATCC MYA-4617 / FGSC 8958) (Rice blast fungus), this protein is 1,4-beta-D-glucan cellobiohydrolase CEL6A.